Consider the following 243-residue polypeptide: MSLFRIFINQLEEDDEDMATSKKMITREEWEKKLNAVKLRKEDMNTLVMNFLVTEGYVEAAEKFQRESGTKPEIDLATITDRMAVKKAVQNGNVEDAIEKVNDLNPEILDTNPELFFHLQQQRLIELIRQGKTEEALEFAQEELAPRGEENQAFLEELEKTVALLVFDDASTCPVKELLDLSHRLKTASEVNAAILTSQSHEKDPKLPSLLKMLIWAQTQLDEKAVYPHINDLSTGKLEDPSE.

The LisH domain occupies 40–72 (RKEDMNTLVMNFLVTEGYVEAAEKFQRESGTKP). A CTLH domain is found at 78-135 (TITDRMAVKKAVQNGNVEDAIEKVNDLNPEILDTNPELFFHLQQQRLIELIRQGKTEE).

Belongs to the GID8 family. In terms of assembly, interacts with RANBPM.

It is found in the cytoplasm. This is Protein GID8 homolog from Arabidopsis thaliana (Mouse-ear cress).